Reading from the N-terminus, the 56-residue chain is Large ribosomal subunit protein bL32 (56 aa).

Residues 1–20 (MAVPKKKKSKSKRNHRHAVW) show a composition bias toward basic residues. The interval 1 to 21 (MAVPKKKKSKSKRNHRHAVWK) is disordered.

It belongs to the bacterial ribosomal protein bL32 family.

This is Large ribosomal subunit protein bL32 from Prochlorococcus marinus (strain MIT 9312).